Here is a 333-residue protein sequence, read N- to C-terminus: MLTLTRICAVSYEVRSTFLFISVLEFAVGFLTNAFIFLVNFWDVVKRQPLSNSDCVLLCLSISRLFLHGLLFLSAIQLTHFQKLSEPLNHSYQAIIMLWIIANQANLWLAACLSLLYCSKLIRFSHTFLICLASWVSRKISQMLLGIILCSCICTVLCVWCFFSRPHFTVTTFLFMNNNTRLNWQIKDLNLFYSFLFCYLWSVPPFLLFLVSSGMLTVSLGRHMRTMKVYTRDSRDPSLEAHIKALKSLVSFFCFFVISSCAAFISVPLLILWRNKIGVMVCVGIMAACPSGHAAVLISGNATLRRAVTTILLWAQSSMKVRADHKADSRTLC.

Over 1–17 the chain is Extracellular; sequence MLTLTRICAVSYEVRST. The helical transmembrane segment at 18-38 threads the bilayer; that stretch reads FLFISVLEFAVGFLTNAFIFL. Over 39-55 the chain is Cytoplasmic; it reads VNFWDVVKRQPLSNSDC. The chain crosses the membrane as a helical span at residues 56–76; it reads VLLCLSISRLFLHGLLFLSAI. Residues 77–94 lie on the Extracellular side of the membrane; the sequence is QLTHFQKLSEPLNHSYQA. The helical transmembrane segment at 95-115 threads the bilayer; the sequence is IIMLWIIANQANLWLAACLSL. Over 116-142 the chain is Cytoplasmic; the sequence is LYCSKLIRFSHTFLICLASWVSRKISQ. A helical membrane pass occupies residues 143 to 163; sequence MLLGIILCSCICTVLCVWCFF. Residues 164–190 are Extracellular-facing; the sequence is SRPHFTVTTFLFMNNNTRLNWQIKDLN. N178 is a glycosylation site (N-linked (GlcNAc...) asparagine). A helical membrane pass occupies residues 191–211; sequence LFYSFLFCYLWSVPPFLLFLV. Over 212 to 251 the chain is Cytoplasmic; it reads SSGMLTVSLGRHMRTMKVYTRDSRDPSLEAHIKALKSLVS. The helical transmembrane segment at 252–272 threads the bilayer; the sequence is FFCFFVISSCAAFISVPLLIL. Residues 273-276 lie on the Extracellular side of the membrane; sequence WRNK. The helical transmembrane segment at 277–297 threads the bilayer; it reads IGVMVCVGIMAACPSGHAAVL. Residues 298-333 are Cytoplasmic-facing; sequence ISGNATLRRAVTTILLWAQSSMKVRADHKADSRTLC.

The protein belongs to the G-protein coupled receptor T2R family.

Its subcellular location is the membrane. Receptor that may play a role in the perception of bitterness and is gustducin-linked. May play a role in sensing the chemical composition of the gastrointestinal content. The activity of this receptor may stimulate alpha gustducin, mediate PLC-beta-2 activation and lead to the gating of TRPM5. This chain is Taste receptor type 2 member 38 (TAS2R38), found in Pongo pygmaeus (Bornean orangutan).